Reading from the N-terminus, the 376-residue chain is Ribosomal RNA large subunit methyltransferase G (376 aa).

This sequence belongs to the methyltransferase superfamily. RlmG family.

The protein localises to the cytoplasm. The catalysed reaction is guanosine(1835) in 23S rRNA + S-adenosyl-L-methionine = N(2)-methylguanosine(1835) in 23S rRNA + S-adenosyl-L-homocysteine + H(+). Functionally, specifically methylates the guanine in position 1835 (m2G1835) of 23S rRNA. This chain is Ribosomal RNA large subunit methyltransferase G, found in Vibrio vulnificus (strain CMCP6).